The following is a 240-amino-acid chain: Transmembrane emp24 domain-containing protein 6 (240 aa).

Residues 1–21 form the signal peptide; sequence MFPLLFVAGLVVLNLVSSARS. At 22–200 the chain is on the lumenal side; sequence QKTEPLSGTG…FFLLQSNYNY (179 aa). Residues 53 to 138 form the GOLD domain; sequence TECFWQFAHQ…SVQVYLNFGV (86 aa). Asn107 and Asn156 each carry an N-linked (GlcNAc...) asparagine glycan. A helical transmembrane segment spans residues 201-223; the sequence is VNWWSTAQSLVIVLSGILQLYFL. Residues 224-240 are Cytoplasmic-facing; that stretch reads KRLFNTPMTTETQKPRC.

This sequence belongs to the EMP24/GP25L family.

The protein localises to the endoplasmic reticulum membrane. The chain is Transmembrane emp24 domain-containing protein 6 (TMED6) from Bos taurus (Bovine).